Reading from the N-terminus, the 327-residue chain is Beta-ketoacyl-[acyl-carrier-protein] synthase III (327 aa).

Active-site residues include C114 and H254. The tract at residues 255–259 (QANQR) is ACP-binding. The active site involves N284.

Belongs to the thiolase-like superfamily. FabH family. As to quaternary structure, homodimer.

The protein resides in the cytoplasm. It catalyses the reaction malonyl-[ACP] + acetyl-CoA + H(+) = 3-oxobutanoyl-[ACP] + CO2 + CoA. It functions in the pathway lipid metabolism; fatty acid biosynthesis. In terms of biological role, catalyzes the condensation reaction of fatty acid synthesis by the addition to an acyl acceptor of two carbons from malonyl-ACP. Catalyzes the first condensation reaction which initiates fatty acid synthesis and may therefore play a role in governing the total rate of fatty acid production. Possesses both acetoacetyl-ACP synthase and acetyl transacylase activities. Its substrate specificity determines the biosynthesis of branched-chain and/or straight-chain of fatty acids. In Levilactobacillus brevis (strain ATCC 367 / BCRC 12310 / CIP 105137 / JCM 1170 / LMG 11437 / NCIMB 947 / NCTC 947) (Lactobacillus brevis), this protein is Beta-ketoacyl-[acyl-carrier-protein] synthase III.